Consider the following 412-residue polypeptide: DnaJ homolog subfamily A member 2 (412 aa).

The J domain occupies 8–70 (KLYDILGVPP…EKRELYDRYG (63 aa)). The residue at position 39 (Lys-39) is an N6-acetyllysine. Residues Ser-78 and Ser-123 each carry the phosphoserine modification. The CR-type zinc-finger motif lies at 130–214 (GKTTKLQLSK…CEGKKVIKEV (85 aa)). Lys-134 participates in a covalent cross-link: Glycyl lysine isopeptide (Lys-Gly) (interchain with G-Cter in SUMO2). Zn(2+)-binding residues include Cys-143 and Cys-146. Residues 143 to 150 (CSACSGQG) form a CXXCXGXG motif repeat. Residue Lys-152 is modified to N6-acetyllysine. Zn(2+) contacts are provided by Cys-159, Cys-162, Cys-186, Cys-189, Cys-202, and Cys-205. 3 CXXCXGXG motif repeats span residues 159–166 (CSACRGRG), 186–193 (CSDCNGEG), and 202–209 (CKKCEGKK). The segment at 365-412 (IGETEEVELQEFDSTRGSGGGQRREAYNDSSDEESSSHHGPGVQCAHQ) is disordered. Tyr-391 is modified (phosphotyrosine). Ser-394 and Ser-395 each carry phosphoserine. Cysteine methyl ester is present on Cys-409. Cys-409 carries S-farnesyl cysteine lipidation. Residues 410–412 (AHQ) constitute a propeptide, removed in mature form.

The protein resides in the membrane. In terms of biological role, co-chaperone of Hsc70. Stimulates ATP hydrolysis and the folding of unfolded proteins mediated by HSPA1A/B (in vitro). This Rattus norvegicus (Rat) protein is DnaJ homolog subfamily A member 2 (Dnaja2).